Reading from the N-terminus, the 333-residue chain is EP300-interacting inhibitor of differentiation 3 (333 aa).

This sequence belongs to the NSE4 family. Component of the SMC5-SMC6 complex which consists at least of SMC5, SMC6, NSMCE2, NSMCE1, NSMCE4A or EID3 and NSMCE3; EID3 seems to be a testis-specific subunit. NSMCE1, NSMCE4A or EID3 and NSMCE3 probably form a subcomplex that bridges the head domains of the SMC5:SMC6 heterodimer. Homodimer, and heterodimer with EID2. Interacts with the C-terminal region of CREBBP. As to expression, highly expressed in testis.

The protein localises to the nucleus. The protein resides in the cytoplasm. It is found in the chromosome. Its subcellular location is the telomere. Its function is as follows. Tissue-specific component of the SMC5-SMC6 complex, a complex involved in repair of DNA double-strand breaks by homologous recombination. The complex may promote sister chromatid homologous recombination by recruiting the SMC1-SMC3 cohesin complex to double-strand breaks. The complex is required for telomere maintenance via recombination and mediates sumoylation of shelterin complex (telosome) components. Acts as a repressor of nuclear receptor-dependent transcription possibly by interfering with CREBBP-dependent coactivation. May function as a coinhibitor of other CREBBP/EP300-dependent transcription factors. This Homo sapiens (Human) protein is EP300-interacting inhibitor of differentiation 3.